The following is a 151-amino-acid chain: MFRGTHRHSLDSKGRMNVPARFRDWLNAHCDGQLVVTIDAQSQKGERCLVAYPLPTWEKVERRIAELPSNNPAARQFQRLFVGQSEELRLDAQARILLSPNLRKFAELDKELVLVGQIDKFEIWDAARWDACQETWLSGADGFACLGDLVL.

2 SpoVT-AbrB domains span residues 5–56 (THRH…PLPT) and 85–128 (SEEL…DAAR).

The protein belongs to the MraZ family. In terms of assembly, forms oligomers.

It localises to the cytoplasm. The protein localises to the nucleoid. The sequence is that of Transcriptional regulator MraZ from Acidithiobacillus ferrooxidans (strain ATCC 23270 / DSM 14882 / CIP 104768 / NCIMB 8455) (Ferrobacillus ferrooxidans (strain ATCC 23270)).